The chain runs to 128 residues: MEVVNALGRRKRAIARVFVSEGTGKITINKRDLAEYFPSTILQYVVKQPLNKLGVAEKYDIKVNLCGGGFTGQSQALRLAIARALVKINAEDKPALRSEGFMTRDPRSVERKKPGQPKARRRFQFSKR.

Basic and acidic residues predominate over residues 97–113 (RSEGFMTRDPRSVERKK). Positions 97-128 (RSEGFMTRDPRSVERKKPGQPKARRRFQFSKR) are disordered. The span at 114 to 128 (PGQPKARRRFQFSKR) shows a compositional bias: basic residues.

It belongs to the universal ribosomal protein uS9 family.

In Bacteroides fragilis (strain ATCC 25285 / DSM 2151 / CCUG 4856 / JCM 11019 / LMG 10263 / NCTC 9343 / Onslow / VPI 2553 / EN-2), this protein is Small ribosomal subunit protein uS9.